A 303-amino-acid chain; its full sequence is 2-phospho-L-lactate transferase (303 aa).

D48 and K87 together coordinate 7,8-didemethyl-8-hydroxy-5-deazariboflavin.

This sequence belongs to the CofD family. Homodimer. It depends on Mg(2+) as a cofactor.

The catalysed reaction is (2S)-lactyl-2-diphospho-5'-guanosine + 7,8-didemethyl-8-hydroxy-5-deazariboflavin = oxidized coenzyme F420-0 + GMP + H(+). The protein operates within cofactor biosynthesis; coenzyme F420 biosynthesis. Functionally, catalyzes the transfer of the 2-phospholactate moiety from (2S)-lactyl-2-diphospho-5'-guanosine to 7,8-didemethyl-8-hydroxy-5-deazariboflavin (FO) with the formation of oxidized coenzyme F420-0 and GMP. The sequence is that of 2-phospho-L-lactate transferase from Methanosarcina mazei (strain ATCC BAA-159 / DSM 3647 / Goe1 / Go1 / JCM 11833 / OCM 88) (Methanosarcina frisia).